The following is an 85-amino-acid chain: Putative membrane protein insertion efficiency factor (85 aa).

The protein belongs to the UPF0161 family.

The protein resides in the cell inner membrane. Could be involved in insertion of integral membrane proteins into the membrane. The sequence is that of Putative membrane protein insertion efficiency factor from Shewanella woodyi (strain ATCC 51908 / MS32).